Reading from the N-terminus, the 349-residue chain is tRNA N6-adenosine threonylcarbamoyltransferase (349 aa).

Positions 111 and 115 each coordinate Fe cation. Substrate is bound by residues 134–138 (LVSGG), D167, G180, D184, and N279. D307 is a binding site for Fe cation.

Belongs to the KAE1 / TsaD family. It depends on Fe(2+) as a cofactor.

The protein localises to the cytoplasm. The enzyme catalyses L-threonylcarbamoyladenylate + adenosine(37) in tRNA = N(6)-L-threonylcarbamoyladenosine(37) in tRNA + AMP + H(+). Its function is as follows. Required for the formation of a threonylcarbamoyl group on adenosine at position 37 (t(6)A37) in tRNAs that read codons beginning with adenine. Is involved in the transfer of the threonylcarbamoyl moiety of threonylcarbamoyl-AMP (TC-AMP) to the N6 group of A37, together with TsaE and TsaB. TsaD likely plays a direct catalytic role in this reaction. The chain is tRNA N6-adenosine threonylcarbamoyltransferase from Nostoc punctiforme (strain ATCC 29133 / PCC 73102).